Reading from the N-terminus, the 577-residue chain is Acyl-coenzyme A synthetase ACSM1, mitochondrial (577 aa).

The transit peptide at 1–31 directs the protein to the mitochondrion; sequence MQWLMRFRTLWGIHKSFHNIHPAPSQLRCRS. Lysine 85 is subject to N6-succinyllysine. N6-acetyllysine; alternate is present on lysine 146. Position 146 is an N6-succinyllysine; alternate (lysine 146). At lysine 183 the chain carries N6-succinyllysine. Lysine 204 carries the N6-acetyllysine; alternate modification. Lysine 204 bears the N6-succinyllysine; alternate mark. Lysine 214 is modified (N6-acetyllysine). 226-234 provides a ligand contact to ATP; the sequence is TSGTTGFPK. Lysine 237 carries the N6-succinyllysine modification. Lysine 356 and lysine 391 each carry N6-acetyllysine; alternate. N6-succinyllysine; alternate is present on residues lysine 356 and lysine 391. ATP contacts are provided by aspartate 452 and arginine 467. Lysine 531 is modified (N6-acetyllysine). Lysine 538 bears the N6-acetyllysine; alternate mark. Residue lysine 538 is modified to N6-succinyllysine; alternate. Lysine 549 bears the N6-acetyllysine mark. An ATP-binding site is contributed by lysine 563.

This sequence belongs to the ATP-dependent AMP-binding enzyme family. As to quaternary structure, monomer. The cofactor is Mg(2+). It depends on Mn(2+) as a cofactor.

The protein resides in the mitochondrion matrix. It is found in the mitochondrion. The enzyme catalyses a medium-chain fatty acid + ATP + CoA = a medium-chain fatty acyl-CoA + AMP + diphosphate. It carries out the reaction benzoate + ATP + CoA = benzoyl-CoA + AMP + diphosphate. It catalyses the reaction (R)-lipoate + GTP + H(+) = (R)-lipoyl-GMP + diphosphate. The catalysed reaction is octanoate + ATP + CoA = octanoyl-CoA + AMP + diphosphate. The enzyme catalyses decanoate + ATP + CoA = decanoyl-CoA + AMP + diphosphate. It carries out the reaction dodecanoate + ATP + CoA = dodecanoyl-CoA + AMP + diphosphate. It catalyses the reaction tetradecanoate + ATP + CoA = tetradecanoyl-CoA + AMP + diphosphate. The catalysed reaction is hexanoate + ATP + CoA = hexanoyl-CoA + AMP + diphosphate. The enzyme catalyses butanoate + ATP + CoA = butanoyl-CoA + AMP + diphosphate. It carries out the reaction hexadecanoate + ATP + CoA = hexadecanoyl-CoA + AMP + diphosphate. With respect to regulation, activated by monovalent cations, such as potassium, rubidium or ammonium. Its function is as follows. Catalyzes the activation of fatty acids by CoA to produce an acyl-CoA, the first step in fatty acid metabolism. Capable of activating medium-chain fatty acids (e.g. butyric (C4) to decanoic (C10) acids), and certain carboxylate-containing xenobiotics, e.g. benzoate. Also catalyzes the activation of lipoate to lipoyl-nucleoside monophosphate. Activates lipoate with GTP at a 1000-fold higher rate than with ATP and activates both (R)- and (S)-lipoate to the respective lipoyl-GMP, with a preference for (R)-lipoate. The polypeptide is Acyl-coenzyme A synthetase ACSM1, mitochondrial (ACSM1) (Homo sapiens (Human)).